The chain runs to 262 residues: Phycoerythrobilin:ferredoxin oxidoreductase (262 aa).

It belongs to the HY2 family.

It catalyses the reaction (3Z)-phycoerythrobilin + oxidized 2[4Fe-4S]-[ferredoxin] = 15,16-dihydrobiliverdin + reduced 2[4Fe-4S]-[ferredoxin] + 2 H(+). Catalyzes the two-electron reduction of the C2 and C3(1) diene system of 15,16-dihydrobiliverdin. This chain is Phycoerythrobilin:ferredoxin oxidoreductase, found in Synechococcus sp. (strain RCC307).